Reading from the N-terminus, the 294-residue chain is tRNA dimethylallyltransferase (294 aa).

Position 10–17 (10–17 (GPTAVGKT)) interacts with ATP. Position 12–17 (12–17 (TAVGKT)) interacts with substrate. The tract at residues 35–38 (DSQQ) is interaction with substrate tRNA.

The protein belongs to the IPP transferase family. Monomer. Requires Mg(2+) as cofactor.

The enzyme catalyses adenosine(37) in tRNA + dimethylallyl diphosphate = N(6)-dimethylallyladenosine(37) in tRNA + diphosphate. In terms of biological role, catalyzes the transfer of a dimethylallyl group onto the adenine at position 37 in tRNAs that read codons beginning with uridine, leading to the formation of N6-(dimethylallyl)adenosine (i(6)A). In Streptococcus suis (strain 05ZYH33), this protein is tRNA dimethylallyltransferase.